A 338-amino-acid chain; its full sequence is UPF0324 membrane protein NMA0465 (338 aa).

A run of 10 helical transmembrane segments spans residues 5–23 (PFYF…ANYL), 33–55 (HISA…YPQF), 62–84 (GVLF…RLTF), 94–116 (AVVT…GIRY), 123–145 (LVYL…AESV), 155–177 (VAIA…FYTW), 222–239 (IRVM…WLLT), 254–273 (IPWF…FDLL), 280–302 (LFVE…TTHA), and 312–334 (PFVL…NYGI).

Belongs to the UPF0324 family.

The protein resides in the cell membrane. This Neisseria meningitidis serogroup A / serotype 4A (strain DSM 15465 / Z2491) protein is UPF0324 membrane protein NMA0465.